Consider the following 2363-residue polypeptide: MTTTVATDYDNIEIQQQYSDVNNRWDVDDWDNENSSARLFERSRIKALADEREAVQKKTFTKWVNSHLARVSCRITDLYTDLRDGRMLIKLLEVLSGERLPKPTKGRMRIHCLENVDKALQFLKEQRVHLENMGSHDIVDGNHRLTLGLIWTIILRFQIQDISVETEDNKEKKSAKDALLLWCQMKTAGYPNVNIHNFTTSWRDGMAFNALIHKHRPDLIDFDKLKKSNAHYNLQNAFNLAEQHLGLTKLLDPEDISVDHPDEKSIITYVVTYYHYFSKMKALAVEGKRIGKVLDNAIETEKMIEKYESLASDLLEWIEQTIIILNNRKFANSLVGVQQQLQAFNTYRTVEKPPKFTEKGNLEVLLFTIQSKMRANNQKVYMPREGKLISDINKAWERLEKAEHERELALRNELIRQEKLEQLARRFDRKAAMRETWLSENQRLVSQDNFGFDLPAVEAATKKHEAIETDIAAYEERVQAVVAVARELEAENYHDIKRITARKDNVIRLWEYLLELLRARRQRLEMNLGLQKIFQEMLYIMDWMDEMKVLLLSQDYGKHLLGVEDLLQKHALVEADIAIQAERVRGVNASAQKFATDGEGYKPCDPQVIRDRVAHMEFCYQELCQLAAERRARLEESRRLWKFFWEMAEEEGWIREKEKILSSDDYGKDLTSVMRLLSKHRAFEDEMSGRSGHFEQAIKEGEDMIAEEHFGSEKIRERIIYIREQWANLEQLSAIRKKRLEEASLLHQFQADADDIDAWMLDILKIVSSNDVGHDEYSTQSLVKKHKDVAEEITNYRPTIDTLHEQASALPQAHAESPDVKGRLAGIEERCKEMAELTRLRKQALQDTLALYKMFSEADACELWIDEKEQWLNNMQIPEKLEDLEVIQHRFESLEPEMNNQASRVAVVNQIARQLMHNGHPSEKEIRAQQDKLNTRWSQFRELVDRKKDALLSALSIQNYHLECNETKSWIREKTKVIESTQDLGNDLAGVMALQRKLTGMERDLVAIEAKLSDLQKEAEKLESEHPDQAQAILSRLAEISDVWEEMKTTLKNREASLGEASKLQQFLRDLDDFQSWLSRTQTAIASEDMPNTLTEAEKLLTQHENIKNEIDNYEEDYQKMRDMGEMVTQGQTDAQYMFLRQRLQALDTGWNELHKMWENRQNLLSQSHAYQQFLRDTKQAEAFLNNQEYVLAHTEMPTTLEGAEAAIKKQEDFMTTMDANEEKINAVVETGRRLVSDGNINSDRIQEKVDSIDDRHRKNREAASELLMRLKDNRDLQKFLQDCQELSLWINEKMLTAQDMSYDEARNLHSKWLKHQAFMAELASNKEWLDKIEKEGMQLISEKPETEAVVKEKLTGLHKMWEVLESTTQTKAQRLFDANKAELFTQSCADLDKWLHGLESQIQSDDYGKDLTSVNILLKKQQMLENQMEVRKKEIEELQSQAQALSQEGKSTDEVDSKRLTVQTKFMELLEPLSERKHNLLASKEIHQFNRDVEDEILWVGERMPLATSTDHGHNLQTVQLLIKKNQTLQKEIQGHQPRIDDIFERSQNIITDSSSLNAEAIRQRLADLKQLWGLLIEETEKRHRRLEEAHKAQQYYFDAAEAEAWMSEQELYMMSEEKAKDEQSAVSMLKKHQILEQAVEDYAETVHQLSKTSRALVADSHPESERISMRQSKVDKLYAGLKDLAEERRGKLDERHRLFQLNREVDDLEQWIAEREVVAGSHELGQDYEHVTMLQERFREFARDTGNIGQERVDTVNNMADELINSGHSDAATIAEWKDGLNEAWADLLELIDTRTQILAASYELHKFYHDAKEIFGRIQDKHKKLPEELGRDQNTVETLQRMHTTFEHDIQALGTQVRQLQEDAARLQAAYAGDKADDIQKRENEVLEAWKSLLDACEGRRVRLVDTGDKFRFFSMVRDLMLWMEDVIRQIEAQEKPRDVSSVELLMNNHQGIKAEIDARNDSFTACIELGKSLLARKHYASEEIKEKLLQLTEKRKEMIDKWEDRWEWLRLILEVHQFSRDASVAEAWLLGQEPYLSSREIGQSVDEVEKLIKRHEAFEKSAATWDERFSALERLTTLELLEVRRQQEEEERKRRPPSPDPNTKVSEEAESQQWDTSKGDQVSQNGLPAEQGSPRMAGTMETSEMVNGAAEQRTSSKESSPVPSPTLDRKAKSALPAQSAATLPARTLETPAAQMEGFLNRKHEWEAHNKKASSRSWHNVYCVINNQEMGFYKDAKSAASGIPYHSEVPVSLKEAICEVALDYKKKKHVFKLRLSDGNEYLFQAKDDEEMNTWIQAISSAISSDKHDTSASTQSTPASSRAQTLPTSVVTITSESSPGKREKDKEKDKEKRFSLFGKKK.

N-acetylthreonine is present on T2. The segment at 2–275 is actin-binding; that stretch reads TTTVATDYDN…IITYVVTYYH (274 aa). Phosphoserine is present on residues I14 and S36. Calponin-homology (CH) domains follow at residues 54 to 158 and 173 to 278; these read AVQK…LRFQ and KSAK…HYFS. An N6-acetyllysine modification is found at K90. Position 228 is a phosphoserine (S228). 15 Spectrin repeats span residues 303–411, 423–525, 530–636, 639–742, 745–847, 850–952, 957–1060, 1063–1166, 1170–1259, 1276–1376, 1381–1482, 1486–1590, 1592–1696, 1698–1801, and 1805–1907; these read MIEK…LALR, LARR…QRLE, LQKI…RLEE, RLWK…RLEE, LLHQ…ALQD, ALYK…DALL, IQNY…SLGE, KLQQ…NLLS, AYQQ…RHRK, DLQK…AQRL, KAEL…HNLL, EIHQ…RLEE, HKAQ…KLDE, HRLF…TQIL, and YELH…RVRL. A phosphoserine mark is found at S817, S903, S1057, S1076, S1079, and S1237. 3 positions are modified to phosphoserine: S1388, S1447, and S1557. The interval 1563 to 2093 is interaction with ANK2; that stretch reads IRQRLADLKQ…LLEVRRQQEE (531 aa). Y1805 is subject to Phosphotyrosine. N6-acetyllysine occurs at positions 1815, 1913, and 1989. 2 Spectrin repeats span residues 1914 to 2014 and 2018 to 2097; these read FRFF…EWLR and EVHQ…EERK. The segment at 2089–2193 is disordered; it reads RQQEEEERKR…AATLPARTLE (105 aa). Residues S2102, S2127, and S2137 each carry the phosphoserine modification. Over residues 2115-2130 the composition is skewed to polar residues; sequence SQQWDTSKGDQVSQNG. T2146 bears the Phosphothreonine mark. At S2147 the chain carries Phosphoserine. Residues 2148–2176 are mediates interaction with CAMSAP1; it reads EMVNGAAEQRTSSKESSPVPSPTLDRKAK. T2158 carries the post-translational modification Phosphothreonine. Phosphoserine is present on residues S2159, S2160, S2163, S2164, and S2168. T2170 is subject to Phosphothreonine. Residue S2183 is modified to Phosphoserine. Residues T2186 and T2194 each carry the phosphothreonine modification. Positions 2196-2306 constitute a PH domain; that stretch reads AAQMEGFLNR…WIQAISSAIS (111 aa). Residues 2308–2363 are disordered; the sequence is DKHDTSASTQSTPASSRAQTLPTSVVTITSESSPGKREKDKEKDKEKRFSLFGKKK. Phosphoserine occurs at positions 2313 and 2318. Positions 2313-2327 are enriched in low complexity; sequence SASTQSTPASSRAQT. The residue at position 2319 (T2319) is a Phosphothreonine. S2323 carries an O-linked (GlcNAc) serine glycan. T2327 bears the Phosphothreonine mark. The segment covering 2328–2340 has biased composition (polar residues); the sequence is LPTSVVTITSESS. Residues S2339 and S2340 each carry the phosphoserine modification. The span at 2341–2356 shows a compositional bias: basic and acidic residues; it reads PGKREKDKEKDKEKRF.

Belongs to the spectrin family. In terms of assembly, interacts with ANK2. Interacts with CPNE4 (via VWFA domain). Like erythrocyte spectrin, the spectrin-like proteins are capable to form dimers which can further associate to tetramers. Interacts with CAMSAP1. Can form heterodimers with SPTAN1. In terms of tissue distribution, isoform 2 is present in brain, heart, kidney and liver (at protein level).

It localises to the cytoplasm. The protein resides in the cytoskeleton. It is found in the endomembrane system. Its subcellular location is the myofibril. The protein localises to the sarcomere. It localises to the m line. The protein resides in the cytosol. It is found in the cell membrane. Functionally, fodrin, which seems to be involved in secretion, interacts with calmodulin in a calcium-dependent manner and is thus candidate for the calcium-dependent movement of the cytoskeleton at the membrane. Plays a critical role in central nervous system development and function. The protein is Spectrin beta chain, non-erythrocytic 1 (Sptbn1) of Mus musculus (Mouse).